A 28-amino-acid polypeptide reads, in one-letter code: Cytochrome b6-f complex subunit 6 (28 aa).

A helical transmembrane segment spans residues 2–22 (VEYLVILSGMFGLALACFFGL).

It belongs to the PetL family. As to quaternary structure, the 4 large subunits of the cytochrome b6-f complex are cytochrome b6, subunit IV (17 kDa polypeptide, PetD), cytochrome f and the Rieske protein, while the 4 small subunits are PetG, PetL, PetM and PetN. The complex functions as a dimer.

It is found in the plastid. The protein resides in the cyanelle thylakoid membrane. Its function is as follows. Component of the cytochrome b6-f complex, which mediates electron transfer between photosystem II (PSII) and photosystem I (PSI), cyclic electron flow around PSI, and state transitions. PetL is important for photoautotrophic growth as well as for electron transfer efficiency and stability of the cytochrome b6-f complex. In Cyanophora paradoxa, this protein is Cytochrome b6-f complex subunit 6.